The following is a 527-amino-acid chain: Catalase (527 aa).

A compositionally biased stretch (basic and acidic residues) spans 1–22 (MADNRDPASDQMKHWKEQRAAQ). Residues 1–32 (MADNRDPASDQMKHWKEQRAAQKPDILTTGSG) are disordered. An N-acetylalanine modification is found at A2. S9 is subject to Phosphoserine. K13 is modified (N6-succinyllysine). Catalysis depends on residues H75 and N148. NADP(+) contacts are provided by H194, S201, R203, and N213. An N6-succinyllysine modification is found at K221. K233 carries the post-translational modification N6-acetyllysine. NADP(+) is bound by residues K237, W303, and H305. Y358 is a binding site for heme. S417 and S434 each carry phosphoserine. K480 is modified (N6-acetyllysine; alternate). K480 is subject to N6-succinyllysine; alternate. K499 carries the post-translational modification N6-acetyllysine. Phosphothreonine is present on T511. S517 carries the phosphoserine modification. The Microbody targeting signal; atypical motif lies at 524–527 (KANL).

The protein belongs to the catalase family. In terms of assembly, homotetramer. Interacts (via microbody targeting signal) with PEX5, monomeric form interacts with PEX5, leading to its translocation into peroxisomes. The cofactor is heme. NADP(+) serves as cofactor.

It localises to the peroxisome matrix. The enzyme catalyses 2 H2O2 = O2 + 2 H2O. Catalyzes the degradation of hydrogen peroxide (H(2)O(2)) generated by peroxisomal oxidases to water and oxygen, thereby protecting cells from the toxic effects of hydrogen peroxide. Promotes growth of cells including T-cells, B-cells, myeloid leukemia cells, melanoma cells, mastocytoma cells and normal and transformed fibroblast cells. In Sus scrofa (Pig), this protein is Catalase (CAT).